Here is a 141-residue protein sequence, read N- to C-terminus: HTH-type transcriptional regulator LrpA (141 aa).

One can recognise an HTH asnC-type domain in the interval 2–63 (IDERDKIILE…RINPKKLGYS (62 aa)). The segment at residues 21–40 (FTEIAKKLGISETAVRKRVK) is a DNA-binding region (H-T-H motif).

Homooctamer; tetramer of dimers.

In terms of biological role, DNA-binding protein that negatively regulates its own transcription. Interferes with RNA polymerase (RNAP) recruitment by inhibiting the association of RNAP with the TBP-TFB promoter complex. This chain is HTH-type transcriptional regulator LrpA (lrpA), found in Pyrococcus horikoshii (strain ATCC 700860 / DSM 12428 / JCM 9974 / NBRC 100139 / OT-3).